We begin with the raw amino-acid sequence, 413 residues long: 26S proteasome regulatory subunit 6B homolog (413 aa).

The interval 1–30 is disordered; it reads MATAMVLDPKPAEKLPATRPETSITDVPSD. The stretch at 32–80 forms a coiled coil; that stretch reads EDDLYARLKSLQRQLEFIEIQEEYVKDELKNLRREHLRAQEEVKRIQSV. 201–208 is an ATP binding site; sequence GPPGTGKT.

Belongs to the AAA ATPase family.

It is found in the cytoplasm. The protein resides in the nucleus. Functionally, the 26S proteasome is involved in the ATP-dependent degradation of ubiquitinated proteins. The regulatory (or ATPase) complex confers ATP dependency and substrate specificity to the 26S complex. This Solanum tuberosum (Potato) protein is 26S proteasome regulatory subunit 6B homolog.